Here is a 171-residue protein sequence, read N- to C-terminus: 3-hydroxydecanoyl-[acyl-carrier-protein] dehydratase (171 aa).

Residue His-70 is part of the active site.

It belongs to the thioester dehydratase family. FabA subfamily. Homodimer.

It is found in the cytoplasm. The catalysed reaction is a (3R)-hydroxyacyl-[ACP] = a (2E)-enoyl-[ACP] + H2O. It catalyses the reaction (3R)-hydroxydecanoyl-[ACP] = (2E)-decenoyl-[ACP] + H2O. The enzyme catalyses (2E)-decenoyl-[ACP] = (3Z)-decenoyl-[ACP]. Its pathway is lipid metabolism; fatty acid biosynthesis. In terms of biological role, necessary for the introduction of cis unsaturation into fatty acids. Catalyzes the dehydration of (3R)-3-hydroxydecanoyl-ACP to E-(2)-decenoyl-ACP and then its isomerization to Z-(3)-decenoyl-ACP. Can catalyze the dehydratase reaction for beta-hydroxyacyl-ACPs with saturated chain lengths up to 16:0, being most active on intermediate chain length. This Stutzerimonas stutzeri (strain A1501) (Pseudomonas stutzeri) protein is 3-hydroxydecanoyl-[acyl-carrier-protein] dehydratase.